A 350-amino-acid polypeptide reads, in one-letter code: tRNA dimethylallyltransferase (350 aa).

The disordered stretch occupies residues 1-20 (MMNTERPAGPLRPPHPPHPP). Over residues 10–20 (PLRPPHPPHPP) the composition is skewed to pro residues. 27–34 (GPTASGKT) serves as a coordination point for ATP. A substrate-binding site is contributed by 29 to 34 (TASGKT). Interaction with substrate tRNA regions lie at residues 52 to 55 (DSAL), 176 to 180 (QRIAR), and 273 to 278 (RCVGYR).

Belongs to the IPP transferase family. Monomer. The cofactor is Mg(2+).

It carries out the reaction adenosine(37) in tRNA + dimethylallyl diphosphate = N(6)-dimethylallyladenosine(37) in tRNA + diphosphate. Its function is as follows. Catalyzes the transfer of a dimethylallyl group onto the adenine at position 37 in tRNAs that read codons beginning with uridine, leading to the formation of N6-(dimethylallyl)adenosine (i(6)A). This chain is tRNA dimethylallyltransferase, found in Albidiferax ferrireducens (strain ATCC BAA-621 / DSM 15236 / T118) (Rhodoferax ferrireducens).